The primary structure comprises 204 residues: Holliday junction branch migration complex subunit RuvA (204 aa).

The domain I stretch occupies residues 1–64 (MIGRLQGILL…EDAHLLFGFA (64 aa)). Residues 65 to 143 (QKTDRTLFRE…GVKQSDFFVE (79 aa)) form a domain II region. Positions 144–155 (STHIPLSPSIES) are flexible linker. The domain III stretch occupies residues 156–204 (HSESSSDEAISALIALGYKPVEAEKMVKRVAKPELTSEQVIREALKAAL).

It belongs to the RuvA family. In terms of assembly, homotetramer. Forms an RuvA(8)-RuvB(12)-Holliday junction (HJ) complex. HJ DNA is sandwiched between 2 RuvA tetramers; dsDNA enters through RuvA and exits via RuvB. An RuvB hexamer assembles on each DNA strand where it exits the tetramer. Each RuvB hexamer is contacted by two RuvA subunits (via domain III) on 2 adjacent RuvB subunits; this complex drives branch migration. In the full resolvosome a probable DNA-RuvA(4)-RuvB(12)-RuvC(2) complex forms which resolves the HJ.

The protein localises to the cytoplasm. Functionally, the RuvA-RuvB-RuvC complex processes Holliday junction (HJ) DNA during genetic recombination and DNA repair, while the RuvA-RuvB complex plays an important role in the rescue of blocked DNA replication forks via replication fork reversal (RFR). RuvA specifically binds to HJ cruciform DNA, conferring on it an open structure. The RuvB hexamer acts as an ATP-dependent pump, pulling dsDNA into and through the RuvAB complex. HJ branch migration allows RuvC to scan DNA until it finds its consensus sequence, where it cleaves and resolves the cruciform DNA. The sequence is that of Holliday junction branch migration complex subunit RuvA from Haemophilus influenzae (strain PittEE).